The chain runs to 469 residues: Protein nucleotidyltransferase YdiU (469 aa).

8 residues coordinate ATP: G80, G82, R83, K103, D115, G116, R166, and R173. D243 acts as the Proton acceptor in catalysis. Mg(2+) contacts are provided by N244 and D253. Residue D253 participates in ATP binding.

Belongs to the SELO family. Requires Mg(2+) as cofactor. Mn(2+) serves as cofactor.

It carries out the reaction L-seryl-[protein] + ATP = 3-O-(5'-adenylyl)-L-seryl-[protein] + diphosphate. The catalysed reaction is L-threonyl-[protein] + ATP = 3-O-(5'-adenylyl)-L-threonyl-[protein] + diphosphate. The enzyme catalyses L-tyrosyl-[protein] + ATP = O-(5'-adenylyl)-L-tyrosyl-[protein] + diphosphate. It catalyses the reaction L-histidyl-[protein] + UTP = N(tele)-(5'-uridylyl)-L-histidyl-[protein] + diphosphate. It carries out the reaction L-seryl-[protein] + UTP = O-(5'-uridylyl)-L-seryl-[protein] + diphosphate. The catalysed reaction is L-tyrosyl-[protein] + UTP = O-(5'-uridylyl)-L-tyrosyl-[protein] + diphosphate. Nucleotidyltransferase involved in the post-translational modification of proteins. It can catalyze the addition of adenosine monophosphate (AMP) or uridine monophosphate (UMP) to a protein, resulting in modifications known as AMPylation and UMPylation. The sequence is that of Protein nucleotidyltransferase YdiU from Pseudoalteromonas translucida (strain TAC 125).